Reading from the N-terminus, the 281-residue chain is 4-deoxy-L-threo-5-hexosulose-uronate ketol-isomerase (281 aa).

4 residues coordinate Zn(2+): His198, His200, Glu205, and His248.

The protein belongs to the KduI family. Zn(2+) is required as a cofactor.

It carries out the reaction 5-dehydro-4-deoxy-D-glucuronate = 3-deoxy-D-glycero-2,5-hexodiulosonate. It functions in the pathway glycan metabolism; pectin degradation; 2-dehydro-3-deoxy-D-gluconate from pectin: step 4/5. In terms of biological role, catalyzes the isomerization of 5-dehydro-4-deoxy-D-glucuronate to 3-deoxy-D-glycero-2,5-hexodiulosonate. The sequence is that of 4-deoxy-L-threo-5-hexosulose-uronate ketol-isomerase from Lacticaseibacillus paracasei (strain ATCC 334 / BCRC 17002 / CCUG 31169 / CIP 107868 / KCTC 3260 / NRRL B-441) (Lactobacillus paracasei).